We begin with the raw amino-acid sequence, 98 residues long: Capsid assembly scaffolding protein (98 aa).

Positions 40–62 (VSEYNDLTKSHEKLAAEKDDLIV) form a coiled coil.

The protein belongs to the phi29likevirus scaffolding protein family. As to quaternary structure, homodimer. Interacts non-specifically with DNA; probably binds DNA in the early stages of DNA packaging.

Functionally, scaffolding protein involved in the icosahedric procapsid assembly. Coassembles with the capsid proteins to form the procapsid. The scaffolding protein is found within the capsid as a serie of concentric shells. During DNA packaging, the scaffolding protein molecules are released from the procapsid. This Bacillus subtilis (Bacteriophage phi-29) protein is Capsid assembly scaffolding protein (7).